The chain runs to 255 residues: MLLTIDIGNTNIKIGAYQGERLTAHWRVTTERHRLADEYLVLLHNLFDLGGIDPRHIDGCAISCVVPPLTGEFRALCHKYFRVDPLMVNASTPTGLQYKVDAPAELGADRIANSLAAFRRYGGPVIVLAFGTATTFDVITATGEYIGGAIAPGIGISADALFRLAAKLYQVELVRPPKVIGTNTIHHMQSGVILGYAGLVEGLVRRMQAELGTSCPVVATGGLAELIAAETEAITTVEPYLTLDGLRLIYEMNRQ.

An ATP-binding site is contributed by 6–13 (DIGNTNIK). 107 to 110 (GADR) is a binding site for substrate. The Proton acceptor role is filled by aspartate 109. Threonine 132 is an ATP binding site. Threonine 184 contributes to the substrate binding site.

This sequence belongs to the type III pantothenate kinase family. As to quaternary structure, homodimer. The cofactor is NH4(+). K(+) is required as a cofactor.

Its subcellular location is the cytoplasm. It carries out the reaction (R)-pantothenate + ATP = (R)-4'-phosphopantothenate + ADP + H(+). Its pathway is cofactor biosynthesis; coenzyme A biosynthesis; CoA from (R)-pantothenate: step 1/5. Catalyzes the phosphorylation of pantothenate (Pan), the first step in CoA biosynthesis. The polypeptide is Type III pantothenate kinase (Roseiflexus castenholzii (strain DSM 13941 / HLO8)).